A 114-amino-acid chain; its full sequence is C-X-C motif chemokine 6 (114 aa).

An N-terminal signal peptide occupies residues 1 to 37; sequence MSLPSSRAARVPGPSGSLCALLALLLLLTPPGPLASA. Disulfide bonds link C49–C75 and C51–C91.

Belongs to the intercrine alpha (chemokine CxC) family.

The protein resides in the secreted. Chemotactic for neutrophil granulocytes. Signals through binding and activation of its receptors (CXCR1 and CXCR2). In addition to its chemotactic and angiogenic properties, it has strong antibacterial activity against Gram-positive and Gram-negative bacteria (90-fold-higher when compared to CXCL5 and CXCL7). The polypeptide is C-X-C motif chemokine 6 (CXCL6) (Homo sapiens (Human)).